Consider the following 281-residue polypeptide: MVQIQFHQGEPLGHKKEKPPPVSPPSPPPIRRVTVITKDEDTLRSVQHFLWMVRLYGTVVFQTSATIATTILFMLIPWRVTAPYLRDTLPFWSTLLPCALRCHAYWLERRRRPGTLMLVMVYTTLTTISVSTIGLCFDRTVVIQAYVLSSMLCVWCTGLAWLMAWNMQRRLAILCLLSFMLPILWLFIAVQSWEPYQRIILALTVSFIYGLKIVLIRDTLTVLYRSPSNCYTDGDLLRTAMLLYMDQVIMFLLVVVPLTAPIWYPNYAGALGRTAHWLFHK.

The tract at residues 11 to 30 is disordered; it reads PLGHKKEKPPPVSPPSPPPI. The span at 20–30 shows a compositional bias: pro residues; it reads PPVSPPSPPPI. 7 helical membrane passes run 58–78, 88–107, 117–137, 145–165, 171–191, 196–216, and 248–268; these read TVVF…LIPW, TLPF…AYWL, MLVM…GLCF, AYVL…LMAW, LAIL…IAVQ, YQRI…IVLI, and VIMF…PNYA.

This sequence belongs to the cytomegalovirus US12 family.

It localises to the membrane. This is an uncharacterized protein from Human cytomegalovirus (strain AD169) (HHV-5).